A 185-amino-acid chain; its full sequence is NOP protein chaperone 1 (185 aa).

Phosphoserine occurs at positions 34, 66, and 177. Residues 121–185 are disordered; sequence SRSDSKEEDS…DSPASKKKKQ (65 aa).

As to quaternary structure, interacts with NOP58, RUVBL1 and RUVBL2; the interactions are direct and NOPCHAP1 bridges the association of NOP58 with RUVBL1:RUVBL2 even in absence of snoRNAs. The interactions with RUVBL1 and RUVBL2 are disrupted upon ATP binding.

Its subcellular location is the nucleus. Client-loading PAQosome/R2TP complex cofactor that selects NOP58 to promote box C/D small nucleolar ribonucleoprotein (snoRNP) assembly. Acts as a bridge between NOP58 and the R2TP complex via RUVBL1:RUVBL2. This chain is NOP protein chaperone 1, found in Mus musculus (Mouse).